We begin with the raw amino-acid sequence, 559 residues long: Alkaline phosphatase PhoK (559 aa).

The first 19 residues, M1–A19, serve as a signal peptide directing secretion. Residues D49 and T89 each coordinate Zn(2+). The active-site Phosphothreonine intermediate is the T89. An intrachain disulfide couples C90 to C126. Residues N110 and K171–R173 each bind substrate. C231 and C314 are disulfide-bonded. Zn(2+) is bound by residues D300, H304, D345, H346, and H491. C545 and C556 are joined by a disulfide.

In terms of assembly, monomer. Zn(2+) is required as a cofactor.

The protein resides in the secreted. The enzyme catalyses a phosphate monoester + H2O = an alcohol + phosphate. Functionally, alkaline phosphatase with broad substrate specificity. Precipitates uranium from alkaline solutions. The polypeptide is Alkaline phosphatase PhoK (Sphingomonas sp).